The sequence spans 150 residues: Calmodulin-like protein 7 (150 aa).

EF-hand domains lie at 1-36 (MDPTELKRVFQMFDKNGDGTITGKELSETLRSLGIY), 37-72 (IPDKELTQMIEKIDVNGDGCVDIDEFGELYKTIMDE), 75-110 (EEEEDMKEAFNVFDQNGDGFITVDELKAVLSSLGLK), and 113-148 (KTLDDCKKMIKKVDVDGDGRVNYKEFRQMMKGGGFN). Positions 14, 16, 18, 20, 25, 50, 52, 54, 56, 61, 88, 90, 92, 99, 126, 128, 130, 132, and 137 each coordinate Ca(2+).

Belongs to the calmodulin family.

Potential calcium sensor. This Arabidopsis thaliana (Mouse-ear cress) protein is Calmodulin-like protein 7 (CML7).